Consider the following 130-residue polypeptide: Albumin-1 D (130 aa).

The signal sequence occupies residues 1 to 26; it reads MASVKLASLIVLFATLGMFLTKNVGA. Disulfide bonds link Cys-29-Cys-46, Cys-33-Cys-48, and Cys-41-Cys-58. 2 consecutive propeptides follow at residues 64–69 and 123–130; these read VFLKAN and LLKSVSTA.

The C-terminal glycine may be removed from PA1b. As to expression, major component of both the cotyledons and embryonic axes of mature seeds.

Functionally, PA1b binds to basic 7S globulin (BG) and stimulates its phosphorylation activity. Involved in the signal transduction system to regulate the growth and differentiation as a hormone peptide. Toxic to various insects through binding to a high affinity binding site in the insect gut. The sequence is that of Albumin-1 D from Pisum sativum (Garden pea).